A 110-amino-acid chain; its full sequence is Hydrogenase maturation factor HypA (110 aa).

His2 provides a ligand contact to Ni(2+). Residues Cys70, Cys73, Cys86, and Cys89 each contribute to the Zn(2+) site.

This sequence belongs to the HypA/HybF family.

Involved in the maturation of [NiFe] hydrogenases. Required for nickel insertion into the metal center of the hydrogenase. The protein is Hydrogenase maturation factor HypA of Geotalea daltonii (strain DSM 22248 / JCM 15807 / FRC-32) (Geobacter daltonii).